The sequence spans 299 residues: Tyrosine recombinase XerC (299 aa).

The Core-binding (CB) domain maps to 1-85 (MKRQLEAYCA…AVRGLYRYLN (85 aa)). In terms of domain architecture, Tyr recombinase spans 106–285 (RLPKVLDTDR…DFQHLAAVYD (180 aa)). Residues Arg-146, Lys-170, His-237, Arg-240, and His-263 contribute to the active site. The active-site O-(3'-phospho-DNA)-tyrosine intermediate is Tyr-272.

Belongs to the 'phage' integrase family. XerC subfamily. As to quaternary structure, forms a cyclic heterotetrameric complex composed of two molecules of XerC and two molecules of XerD.

The protein localises to the cytoplasm. Site-specific tyrosine recombinase, which acts by catalyzing the cutting and rejoining of the recombining DNA molecules. The XerC-XerD complex is essential to convert dimers of the bacterial chromosome into monomers to permit their segregation at cell division. It also contributes to the segregational stability of plasmids. This chain is Tyrosine recombinase XerC, found in Pseudomonas putida (strain ATCC 700007 / DSM 6899 / JCM 31910 / BCRC 17059 / LMG 24140 / F1).